We begin with the raw amino-acid sequence, 505 residues long: ATP synthase subunit alpha (505 aa).

170–177 (GDRQTGKS) lines the ATP pocket.

Belongs to the ATPase alpha/beta chains family. As to quaternary structure, F-type ATPases have 2 components, CF(1) - the catalytic core - and CF(0) - the membrane proton channel. CF(1) has five subunits: alpha(3), beta(3), gamma(1), delta(1), epsilon(1). CF(0) has four main subunits: a(1), b(1), b'(1) and c(9-12).

Its subcellular location is the cellular thylakoid membrane. The catalysed reaction is ATP + H2O + 4 H(+)(in) = ADP + phosphate + 5 H(+)(out). Functionally, produces ATP from ADP in the presence of a proton gradient across the membrane. The alpha chain is a regulatory subunit. This Prochlorococcus marinus (strain AS9601) protein is ATP synthase subunit alpha.